Consider the following 88-residue polypeptide: Large ribosomal subunit protein bL27 (88 aa).

The interval 1–24 is disordered; sequence MAHKKGTGSTRNGRDSNSKRLGVK.

This sequence belongs to the bacterial ribosomal protein bL27 family.

This Prochlorococcus marinus (strain MIT 9313) protein is Large ribosomal subunit protein bL27.